A 367-amino-acid chain; its full sequence is MAYRVLGRAGPPQPRRARRLLFAFTLSLSCTYLCYSFLCCCDDLGRSRLLGAPRCLRGPSAGGQKLLQKSRPCDPSGPTPSEPSAPSAPAAAVPAPRLSGSNHSGSPKLGTKRLPQALIVGVKKGGTRAVLEFIRVHPDVRALGTEPHFFDRNYGRGLDWYRSLMPRTLESQITLEKTPSYFVTQEAPRRIFNMSRDTKLIVVVRNPVTRAISDYTQTLSKKPDIPTFEGLSFRNRTLGLVDVSWNAIRIGMYVLHLESWLQYFPLAQIHFVSGERLITDPAGEMGRVQDFLGIKRFITDKHFYFNKTKGFPCLKKTESSLLPRCLGKSKGRTHVQIDPEVIDQLREFYRPYNIKFYETVGQDFRWE.

The Cytoplasmic portion of the chain corresponds to Met1–Arg19. A helical; Signal-anchor for type II membrane protein membrane pass occupies residues Leu20–Cys39. The Lumenal segment spans residues Cys40–Glu367. Positions Ala61–Gly110 are disordered. The segment covering Ser84 to Pro96 has biased composition (low complexity). Residue Asn102 is glycosylated (N-linked (GlcNAc...) asparagine). Lys124–Arg128 contacts 3'-phosphoadenylyl sulfate. Substrate is bound by residues Glu146–Arg152 and Lys177–Ser180. An N-linked (GlcNAc...) asparagine glycan is attached at Asn193. 2 residues coordinate 3'-phosphoadenylyl sulfate: Arg205 and Ser213. Asn235 carries an N-linked (GlcNAc...) asparagine glycan. Trp245–Asn246 lines the substrate pocket. Residue Asn306 is glycosylated (N-linked (GlcNAc...) asparagine). Cys313 and Cys325 are disulfide-bonded. Lys330–His334 serves as a coordination point for 3'-phosphoadenylyl sulfate.

Belongs to the sulfotransferase 1 family. In terms of tissue distribution, highly expressed in the brain and weakly expressed in the heart, placenta, lung and skeletal muscle.

It is found in the golgi apparatus membrane. It catalyses the reaction alpha-D-glucosaminyl-[heparan sulfate](n) + 3'-phosphoadenylyl sulfate = 3-sulfo-alpha-D-glucosaminyl-[heparan sulfate](n) + adenosine 3',5'-bisphosphate + H(+). Functionally, sulfotransferase that utilizes 3'-phospho-5'-adenylyl sulfate (PAPS) to catalyze the transfer of a sulfo group to an N-unsubstituted glucosamine linked to a 2-O-sulfo iduronic acid unit on heparan sulfate. Catalyzes the O-sulfation of glucosamine in GlcA2S-GlcNS. Unlike HS3ST1/3-OST-1, does not convert non-anticoagulant heparan sulfate to anticoagulant heparan sulfate. This chain is Heparan sulfate glucosamine 3-O-sulfotransferase 2 (HS3ST2), found in Homo sapiens (Human).